Consider the following 152-residue polypeptide: Protein NrdI (152 aa).

It belongs to the NrdI family.

Its function is as follows. Probably involved in ribonucleotide reductase function. The chain is Protein NrdI from Rhodococcus opacus (strain B4).